Here is a 513-residue protein sequence, read N- to C-terminus: 2-isopropylmalate synthase (513 aa).

Positions 5 to 267 constitute a Pyruvate carboxyltransferase domain; the sequence is LVIFDTTLRD…ETRIDTTQIV (263 aa). 4 residues coordinate Mn(2+): Asp-14, His-202, His-204, and Asn-238. The interval 393-513 is regulatory domain; it reads KLVYSRVCSE…LDKVKAQGGV (121 aa).

Belongs to the alpha-IPM synthase/homocitrate synthase family. LeuA type 1 subfamily. Homodimer. The cofactor is Mn(2+).

The protein resides in the cytoplasm. The catalysed reaction is 3-methyl-2-oxobutanoate + acetyl-CoA + H2O = (2S)-2-isopropylmalate + CoA + H(+). Its pathway is amino-acid biosynthesis; L-leucine biosynthesis; L-leucine from 3-methyl-2-oxobutanoate: step 1/4. In terms of biological role, catalyzes the condensation of the acetyl group of acetyl-CoA with 3-methyl-2-oxobutanoate (2-ketoisovalerate) to form 3-carboxy-3-hydroxy-4-methylpentanoate (2-isopropylmalate). This is 2-isopropylmalate synthase from Dechloromonas aromatica (strain RCB).